We begin with the raw amino-acid sequence, 213 residues long: Cell division protein SepF (213 aa).

Positions 27–103 (VDAPAPRRAP…GSLRGSAPTR (77 aa)) are disordered. Basic and acidic residues-rich tracts occupy residues 35-51 (APVE…RFAD) and 72-90 (DEDR…DRPA).

It belongs to the SepF family. In terms of assembly, homodimer. Interacts with FtsZ.

It localises to the cytoplasm. Cell division protein that is part of the divisome complex and is recruited early to the Z-ring. Probably stimulates Z-ring formation, perhaps through the cross-linking of FtsZ protofilaments. Its function overlaps with FtsA. The sequence is that of Cell division protein SepF from Mycobacteroides abscessus (strain ATCC 19977 / DSM 44196 / CCUG 20993 / CIP 104536 / JCM 13569 / NCTC 13031 / TMC 1543 / L948) (Mycobacterium abscessus).